The chain runs to 569 residues: Urease subunit alpha (569 aa).

Positions 131–569 constitute a Urease domain; the sequence is GAIDSHIHFI…LPLAQRYLLL (439 aa). 3 residues coordinate Ni(2+): His136, His138, and Lys219. Lys219 is subject to N6-carboxylysine. His221 is a substrate binding site. Ni(2+) is bound by residues His248 and His274. His322 (proton donor) is an active-site residue. Asp362 serves as a coordination point for Ni(2+).

Belongs to the metallo-dependent hydrolases superfamily. Urease alpha subunit family. Heterotrimer of UreA (gamma), UreB (beta) and UreC (alpha) subunits. Three heterotrimers associate to form the active enzyme. The cofactor is Ni cation. Post-translationally, carboxylation allows a single lysine to coordinate two nickel ions.

The protein localises to the cytoplasm. It carries out the reaction urea + 2 H2O + H(+) = hydrogencarbonate + 2 NH4(+). It participates in nitrogen metabolism; urea degradation; CO(2) and NH(3) from urea (urease route): step 1/1. The chain is Urease subunit alpha from Prochlorococcus marinus (strain NATL1A).